We begin with the raw amino-acid sequence, 350 residues long: Heat-inducible transcription repressor HrcA (350 aa).

The protein belongs to the HrcA family.

Its function is as follows. Negative regulator of class I heat shock genes (grpE-dnaK-dnaJ and groELS operons). Prevents heat-shock induction of these operons. The polypeptide is Heat-inducible transcription repressor HrcA (Methylococcus capsulatus (strain ATCC 33009 / NCIMB 11132 / Bath)).